Here is a 400-residue protein sequence, read N- to C-terminus: Probable glycosyltransferase WbjE (400 aa).

The protein belongs to the glycosyltransferase group 1 family. Glycosyltransferase 4 subfamily.

The protein operates within bacterial outer membrane biogenesis; LPS O-antigen biosynthesis. This is Probable glycosyltransferase WbjE (wbjE) from Pseudomonas aeruginosa.